The following is a 252-amino-acid chain: Imidazole glycerol phosphate synthase subunit HisF (252 aa).

Active-site residues include D13 and D132.

Belongs to the HisA/HisF family. Heterodimer of HisH and HisF.

It is found in the cytoplasm. The catalysed reaction is 5-[(5-phospho-1-deoxy-D-ribulos-1-ylimino)methylamino]-1-(5-phospho-beta-D-ribosyl)imidazole-4-carboxamide + L-glutamine = D-erythro-1-(imidazol-4-yl)glycerol 3-phosphate + 5-amino-1-(5-phospho-beta-D-ribosyl)imidazole-4-carboxamide + L-glutamate + H(+). The protein operates within amino-acid biosynthesis; L-histidine biosynthesis; L-histidine from 5-phospho-alpha-D-ribose 1-diphosphate: step 5/9. Functionally, IGPS catalyzes the conversion of PRFAR and glutamine to IGP, AICAR and glutamate. The HisF subunit catalyzes the cyclization activity that produces IGP and AICAR from PRFAR using the ammonia provided by the HisH subunit. In Campylobacter fetus subsp. fetus (strain 82-40), this protein is Imidazole glycerol phosphate synthase subunit HisF.